Here is a 342-residue protein sequence, read N- to C-terminus: BAG family molecular chaperone regulator 1 (342 aa).

The disordered stretch occupies residues 1-41; sequence MMKMMRNKPTNLPTAGMTNGGRGSGGGGGGGGRESGGRDLE. Over residues 8–17 the composition is skewed to polar residues; that stretch reads KPTNLPTAGM. Over residues 18-34 the composition is skewed to gly residues; it reads TNGGRGSGGGGGGGGRE. Residues 65-141 enclose the Ubiquitin-like domain; that stretch reads PMIRVRIKYG…MVLIEDPLSQ (77 aa). In terms of domain architecture, BAG spans 160 to 238; that stretch reads AISDISLEVD…NYVETLDALK (79 aa). Residue S298 is modified to Phosphoserine.

In terms of assembly, binds to the ATPase domain of HSP70/HSC70 chaperones.

In terms of biological role, co-chaperone that regulates diverse cellular pathways, such as programmed cell death and stress responses. The polypeptide is BAG family molecular chaperone regulator 1 (BAG1) (Arabidopsis thaliana (Mouse-ear cress)).